A 636-amino-acid chain; its full sequence is 1-deoxy-D-xylulose-5-phosphate synthase (636 aa).

Thiamine diphosphate contacts are provided by residues histidine 74 and alanine 115–serine 117. Aspartate 146 serves as a coordination point for Mg(2+). Thiamine diphosphate is bound by residues glycine 147–serine 148, asparagine 176, tyrosine 287, and glutamate 369. Residue asparagine 176 participates in Mg(2+) binding.

The protein belongs to the transketolase family. DXPS subfamily. In terms of assembly, homodimer. It depends on Mg(2+) as a cofactor. Requires thiamine diphosphate as cofactor.

The enzyme catalyses D-glyceraldehyde 3-phosphate + pyruvate + H(+) = 1-deoxy-D-xylulose 5-phosphate + CO2. The protein operates within metabolic intermediate biosynthesis; 1-deoxy-D-xylulose 5-phosphate biosynthesis; 1-deoxy-D-xylulose 5-phosphate from D-glyceraldehyde 3-phosphate and pyruvate: step 1/1. Catalyzes the acyloin condensation reaction between C atoms 2 and 3 of pyruvate and glyceraldehyde 3-phosphate to yield 1-deoxy-D-xylulose-5-phosphate (DXP). The polypeptide is 1-deoxy-D-xylulose-5-phosphate synthase (Polaromonas naphthalenivorans (strain CJ2)).